Reading from the N-terminus, the 253-residue chain is 5-oxoprolinase subunit A (253 aa).

The protein belongs to the LamB/PxpA family. In terms of assembly, forms a complex composed of PxpA, PxpB and PxpC.

The catalysed reaction is 5-oxo-L-proline + ATP + 2 H2O = L-glutamate + ADP + phosphate + H(+). Its function is as follows. Catalyzes the cleavage of 5-oxoproline to form L-glutamate coupled to the hydrolysis of ATP to ADP and inorganic phosphate. This is 5-oxoprolinase subunit A from Bacillus cereus (strain AH187).